Reading from the N-terminus, the 218-residue chain is uncharacterized protein (218 aa).

An ACT domain is found at 4 to 83 (GISIEAENKV…IHSSLKKIYG (80 aa)).

This is an uncharacterized protein from Methanocaldococcus jannaschii (strain ATCC 43067 / DSM 2661 / JAL-1 / JCM 10045 / NBRC 100440) (Methanococcus jannaschii).